The chain runs to 43 residues: Defensin (43 aa).

Disulfide bonds link C3/C34, C20/C39, and C24/C41.

Belongs to the invertebrate defensin family. Type 1 subfamily.

It localises to the secreted. Antibacterial peptide. Affects Gram-positive bacteria M.luteus, B.megaterium, A.viridans, S.aureus and S.saprophyticus. Moderate activity against P.acidilactici and B.subtilis QB935. Also affects Gram-negative bacterium, D22 form of E.coli. This chain is Defensin, found in Pyrrhocoris apterus (Sap sucking bug).